The primary structure comprises 401 residues: Enolase (401 aa).

Residue Q154 participates in (2R)-2-phosphoglycerate binding. Catalysis depends on E196, which acts as the Proton donor. Mg(2+) contacts are provided by D232, E275, and D302. Positions 327, 356, 357, and 378 each coordinate (2R)-2-phosphoglycerate. Residue K327 is the Proton acceptor of the active site.

Belongs to the enolase family. The cofactor is Mg(2+).

The protein resides in the cytoplasm. Its subcellular location is the secreted. It is found in the cell surface. It carries out the reaction (2R)-2-phosphoglycerate = phosphoenolpyruvate + H2O. It participates in carbohydrate degradation; glycolysis; pyruvate from D-glyceraldehyde 3-phosphate: step 4/5. In terms of biological role, catalyzes the reversible conversion of 2-phosphoglycerate (2-PG) into phosphoenolpyruvate (PEP). It is essential for the degradation of carbohydrates via glycolysis. This is Enolase from Haloquadratum walsbyi (strain DSM 16790 / HBSQ001).